Reading from the N-terminus, the 203-residue chain is ATP-dependent Clp protease proteolytic subunit 1 (203 aa).

Ser98 serves as the catalytic Nucleophile. The active site involves His123.

Belongs to the peptidase S14 family. Fourteen ClpP subunits assemble into 2 heptameric rings which stack back to back to give a disk-like structure with a central cavity, resembling the structure of eukaryotic proteasomes.

It is found in the cytoplasm. It carries out the reaction Hydrolysis of proteins to small peptides in the presence of ATP and magnesium. alpha-casein is the usual test substrate. In the absence of ATP, only oligopeptides shorter than five residues are hydrolyzed (such as succinyl-Leu-Tyr-|-NHMec, and Leu-Tyr-Leu-|-Tyr-Trp, in which cleavage of the -Tyr-|-Leu- and -Tyr-|-Trp bonds also occurs).. Its function is as follows. Cleaves peptides in various proteins in a process that requires ATP hydrolysis. Has a chymotrypsin-like activity. Plays a major role in the degradation of misfolded proteins. This chain is ATP-dependent Clp protease proteolytic subunit 1, found in Chlamydia felis (strain Fe/C-56) (Chlamydophila felis).